The primary structure comprises 152 residues: Large ribosomal subunit protein bL9 (152 aa).

Belongs to the bacterial ribosomal protein bL9 family.

In terms of biological role, binds to the 23S rRNA. The protein is Large ribosomal subunit protein bL9 of Streptococcus thermophilus (strain CNRZ 1066).